The chain runs to 454 residues: MKKLFGTDGVRGVANVYPMTAEMAMQIGRAAAYIFKNGKKRHRIVIGKDTRLSGYMLESALMAGICSMGVDVLLVGPLPTPGIANITSSMRADAGVVISASHNPFEDNGIKFFSRDGFKLPDETELLMEELIFSKRIDSLRPTAKEVGKAYRIDDAQGRFVVFLKSTFPKDLDLSGLKIVLDCANGAAYKVAPAVFEELGAEVISIGVKPNGTNINADCGSLHPEVMSRAVKENGADLGIALDGDADRVIFVDEYGNVVDGDRIMAICATEMLRQGTLKQNTLVATVMSNMGLDIAMKRAGGQVVKTAVGDRYVVEEMLKGGYNLGGEQSGHMIFLDHNTTGDGVLSALQVLAIMQRHQKRLSELALVMDPLPQVLVNVRLAEKSDIMQVPEIAKMINDVEERLKGEGRVLIRYSGTEPLLRIMLEGSDEGDIRCWANDIASIVEQKLGGEARG.

Serine 101 functions as the Phosphoserine intermediate in the catalytic mechanism. Residues serine 101, aspartate 243, aspartate 245, and aspartate 247 each coordinate Mg(2+). A Phosphoserine modification is found at serine 101.

This sequence belongs to the phosphohexose mutase family. Mg(2+) serves as cofactor. In terms of processing, activated by phosphorylation.

The catalysed reaction is alpha-D-glucosamine 1-phosphate = D-glucosamine 6-phosphate. In terms of biological role, catalyzes the conversion of glucosamine-6-phosphate to glucosamine-1-phosphate. The sequence is that of Phosphoglucosamine mutase from Geobacter sp. (strain M21).